The chain runs to 411 residues: UPF0261 protein SACE_5696 (411 aa).

It belongs to the UPF0261 family.

This chain is UPF0261 protein SACE_5696, found in Saccharopolyspora erythraea (strain ATCC 11635 / DSM 40517 / JCM 4748 / NBRC 13426 / NCIMB 8594 / NRRL 2338).